An 83-amino-acid polypeptide reads, in one-letter code: MVVIRLSRGGSKGRPFFNIVVADKRVRRDGRFIERLGFYNPSAKEGEEGLRIAQDRLTYWKGVGAQPSPTVDRLIKQAAQKAA.

The protein belongs to the bacterial ribosomal protein bS16 family.

This is Small ribosomal subunit protein bS16 from Acidovorax ebreus (strain TPSY) (Diaphorobacter sp. (strain TPSY)).